The chain runs to 103 residues: NADH-ubiquinone oxidoreductase chain 4L (103 aa).

The next 3 membrane-spanning stretches (helical) occupy residues 6–26 (IFFL…GIFI), 31–51 (IIII…NFAI), and 65–85 (ILYT…ILII).

It belongs to the complex I subunit 4L family.

The protein localises to the mitochondrion membrane. It catalyses the reaction a ubiquinone + NADH + 5 H(+)(in) = a ubiquinol + NAD(+) + 4 H(+)(out). In terms of biological role, core subunit of the mitochondrial membrane respiratory chain NADH dehydrogenase (Complex I) that is believed to belong to the minimal assembly required for catalysis. Complex I functions in the transfer of electrons from NADH to the respiratory chain. The immediate electron acceptor for the enzyme is believed to be ubiquinone. This Acanthamoeba castellanii (Amoeba) protein is NADH-ubiquinone oxidoreductase chain 4L (ND4L).